The primary structure comprises 464 residues: UDP-N-acetylmuramate--L-alanine ligase (464 aa).

118–124 contributes to the ATP binding site; the sequence is GTHGKTT.

It belongs to the MurCDEF family.

The protein localises to the cytoplasm. The enzyme catalyses UDP-N-acetyl-alpha-D-muramate + L-alanine + ATP = UDP-N-acetyl-alpha-D-muramoyl-L-alanine + ADP + phosphate + H(+). It functions in the pathway cell wall biogenesis; peptidoglycan biosynthesis. Its function is as follows. Cell wall formation. This is UDP-N-acetylmuramate--L-alanine ligase from Dinoroseobacter shibae (strain DSM 16493 / NCIMB 14021 / DFL 12).